The following is a 446-amino-acid chain: Tubulin beta-8 chain (446 aa).

The GTP site is built by Q11, E69, S138, G142, T143, G144, N204, and N226. Position 69 (E69) interacts with Mg(2+). The tract at residues 426–446 is disordered; that stretch reads QDATAEDDYDEDDDAAAADEA. Acidic residues predominate over residues 429–446; it reads TAEDDYDEDDDAAAADEA.

This sequence belongs to the tubulin family. As to quaternary structure, dimer of alpha and beta chains. A typical microtubule is a hollow water-filled tube with an outer diameter of 25 nm and an inner diameter of 15 nM. Alpha-beta heterodimers associate head-to-tail to form protofilaments running lengthwise along the microtubule wall with the beta-tubulin subunit facing the microtubule plus end conferring a structural polarity. Microtubules usually have 13 protofilaments but different protofilament numbers can be found in some organisms and specialized cells. Mg(2+) is required as a cofactor. In terms of tissue distribution, expressed in anthers.

Its subcellular location is the cytoplasm. It is found in the cytoskeleton. Its function is as follows. Tubulin is the major constituent of microtubules, a cylinder consisting of laterally associated linear protofilaments composed of alpha- and beta-tubulin heterodimers. Microtubules grow by the addition of GTP-tubulin dimers to the microtubule end, where a stabilizing cap forms. Below the cap, tubulin dimers are in GDP-bound state, owing to GTPase activity of alpha-tubulin. The chain is Tubulin beta-8 chain (TUBB8) from Oryza sativa subsp. japonica (Rice).